Reading from the N-terminus, the 425-residue chain is tRNA (guanine-N(7)-)-methyltransferase non-catalytic subunit wuho (425 aa).

The disordered stretch occupies residues A67 to V102. Over residues G88–V102 the composition is skewed to low complexity. WD repeat units lie at residues V97–L138, P142–R181, G185–S224, G228–Q266, and A325–S365.

It belongs to the WD repeat TRM82 family. As to quaternary structure, forms a heterodimer with the catalytic subunit Mettl1. Interacts with mei-P26 and weakly interacts with bgcn; required for the function or formation of the mei-P26-bgcn-bam-sxl complex. Interacts with nanos; may be involved in mei-P26-dependent derepression of the BMP signaling pathway. Interacts with Myc; the interaction may be mediated by mei-P26 and may be involved in the regulation of ribosome biogenesis. As to expression, in testis, it is present at high level in hub cells, a niche for germline stem cells of testis. Ubiquitously expressed in all testicular cells throughout spermatogenesis. Ubiquitously expressed in all germline and somatic cells of the ovary.

It localises to the nucleus. It is found in the cytoplasm. It participates in tRNA modification; N(7)-methylguanine-tRNA biosynthesis. Functionally, required for the Mettl1-dependent formation of N(7)-methylguanine at position 46 (m7G46) in tRNA. In the Mettl1-wuho methyltransferase complex, it is required to stabilize and induce conformational changes of the catalytic subunit. Required for binding of nanos mRNA and repression of translation by the mei-P26-bgcn-bam-sxl complex. May cooperate with mei-P26 and nanos to derepress the BMP signaling pathway. May cooperate with mei-P26 to suppress expression of a subset of microRNAs. May cooperate with mei-P26 to regulate bam expression levels in germline cells during gametogenesis. Required to promote mitosis to meiosis transition during gametogenesis. May regulate germline cell division in part by regulating ribosome biogenesis. This Drosophila yakuba (Fruit fly) protein is tRNA (guanine-N(7)-)-methyltransferase non-catalytic subunit wuho.